The primary structure comprises 214 residues: Phosphopantothenoylcysteine decarboxylase HAL3 (214 aa).

FMN is bound by residues 30-32 (GSV) and 55-57 (TRA). The active-site Proton donor is histidine 92. FMN contacts are provided by residues 108-111 (SANT) and alanine 142. Residues asparagine 144, arginine 174, and alanine 176 each contribute to the N-[(R)-4-phosphopantothenoyl]-L-cysteine site. Cysteine 177 serves as the catalytic Proton donor. N-[(R)-4-phosphopantothenoyl]-L-cysteine is bound at residue methionine 185.

It belongs to the HFCD (homooligomeric flavin containing Cys decarboxylase) superfamily. Homotrimer. FMN serves as cofactor. In terms of tissue distribution, mainly expressed in stems, to a lower extent in flowers, leaves and fruits, and at basal levels in roots.

The protein resides in the cell membrane. The protein localises to the cytoplasm. The catalysed reaction is N-[(R)-4-phosphopantothenoyl]-L-cysteine + H(+) = (R)-4'-phosphopantetheine + CO2. The protein operates within cofactor biosynthesis; coenzyme A biosynthesis; CoA from (R)-pantothenate: step 3/5. Involved in plant growth, and promotes salt and osmotic tolerance, probably via coenzyme A (CoA) accumulation and endogenous proline accumulation. Catalyzes the decarboxylation of 4'-phosphopantothenoylcysteine to 4'-phosphopantetheine, a key step in coenzyme A biosynthesis. Required for roots development. In Malus domestica (Apple), this protein is Phosphopantothenoylcysteine decarboxylase HAL3.